We begin with the raw amino-acid sequence, 201 residues long: Inosine triphosphate pyrophosphatase (201 aa).

16–21 contacts ITP; that stretch reads TGNAKK. Glutamate 44 contributes to the Mg(2+) binding site. Residues lysine 56, 72–73, lysine 89, 148–151, lysine 171, and 176–177 each bind ITP; these read DT, FGWD, and HR.

The protein belongs to the HAM1 NTPase family. In terms of assembly, homodimer. The cofactor is Mg(2+). Requires Mn(2+) as cofactor.

The protein localises to the cytoplasm. The enzyme catalyses ITP + H2O = IMP + diphosphate + H(+). It catalyses the reaction dITP + H2O = dIMP + diphosphate + H(+). The catalysed reaction is XTP + H2O = XMP + diphosphate + H(+). Functionally, pyrophosphatase that hydrolyzes non-canonical purine nucleotides such as inosine triphosphate (ITP), deoxyinosine triphosphate (dITP) or xanthosine 5'-triphosphate (XTP) to their respective monophosphate derivatives. The enzyme does not distinguish between the deoxy- and ribose forms. Probably excludes non-canonical purines from RNA and DNA precursor pools, thus preventing their incorporation into RNA and DNA and avoiding chromosomal lesions. This Sorghum bicolor (Sorghum) protein is Inosine triphosphate pyrophosphatase.